Reading from the N-terminus, the 456-residue chain is High mobility group B protein 6 (456 aa).

4 disordered regions span residues 1–42 (MATN…KSAK), 117–142 (SSLTQAEQEKANKKKKKDCPETKRPS), 238–258 (AEQDNKKKNKKEKDPLKPKHP), and 349–389 (MLKK…YFLF). Residues 11-21 (KKPRNSRKALK) are compositionally biased toward basic residues. A DNA-binding region (HMG box 1) is located at residues 138-206 (TKRPSSSYVL…AYLQVIAKEK (69 aa)). Residues 240–254 (QDNKKKNKKEKDPLK) show a composition bias toward basic and acidic residues. A DNA-binding region (HMG box 2) is located at residues 255–321 (PKHPVSAFLV…TYLQAMEEYK (67 aa)). Basic and acidic residues predominate over residues 354–363 (EKTDNLIKKE). A DNA-binding region (HMG box 3) is located at residues 379 to 447 (PKKPASSYFL…AYKKEVEAYN (69 aa)).

It is found in the nucleus. In Arabidopsis thaliana (Mouse-ear cress), this protein is High mobility group B protein 6 (HMGB6).